A 370-amino-acid chain; its full sequence is Phosphoserine aminotransferase (370 aa).

Position 1 is an N-acetylmethionine (methionine 1). Residues histidine 44 and arginine 45 each contribute to the O-phospho-L-serine site. An N6-acetyllysine modification is found at lysine 51. Pyridoxal 5'-phosphate-binding residues include glycine 79 and tryptophan 107. At lysine 127 the chain carries N6-acetyllysine. Positions 156, 176, and 199 each coordinate pyridoxal 5'-phosphate. At lysine 200 the chain carries N6-(pyridoxal phosphate)lysine. Pyridoxal 5'-phosphate-binding residues include asparagine 241 and threonine 242. N6-acetyllysine is present on residues lysine 269, lysine 318, and lysine 323. The residue at position 331 (serine 331) is a Phosphoserine. Position 333 is an N6-acetyllysine (lysine 333). Positions 335, 336, and 342 each coordinate O-phospho-L-serine.

It belongs to the class-V pyridoxal-phosphate-dependent aminotransferase family. SerC subfamily. As to quaternary structure, homodimer. The cofactor is pyridoxal 5'-phosphate.

It catalyses the reaction O-phospho-L-serine + 2-oxoglutarate = 3-phosphooxypyruvate + L-glutamate. It participates in amino-acid biosynthesis; L-serine biosynthesis; L-serine from 3-phospho-D-glycerate: step 2/3. Involved in L-serine biosynthesis via the phosphorylated pathway, a three-step pathway converting the glycolytic intermediate 3-phospho-D-glycerate into L-serine. Catalyzes the second step, that is the pyridoxal 5'-phosphate-dependent transamination of 3-phosphohydroxypyruvate and L-glutamate to O-phosphoserine (OPS) and alpha-ketoglutarate. The protein is Phosphoserine aminotransferase of Mus musculus (Mouse).